We begin with the raw amino-acid sequence, 241 residues long: Interleukin-6 (241 aa).

The signal sequence occupies residues 1–26 (MNSFTSALRPGPLGCSLALLLVVATA). Residues 32–51 (PVREDSNTKASPDKTLTPPG) form a disordered region. Cystine bridges form between C72-C78 and C101-C111. N-linked (GlcNAc...) asparagine glycosylation is present at N108.

The protein belongs to the IL-6 superfamily. In terms of assembly, component of a hexamer of two molecules each of IL6, IL6R and IL6ST; first binds to IL6R to associate with the signaling subunit IL6ST. Interacts with IL6R (via the N-terminal ectodomain); this interaction may be affected by IL6R-binding with SORL1, hence decreasing IL6 cis signaling. Interacts with SORL1 (via the N-terminal ectodomain); this interaction leads to IL6 internalization and lysosomal degradation. May form a trimeric complex with the soluble SORL1 ectodomain and soluble IL6R receptor; this interaction might stabilize circulating IL6, hence promoting IL6 trans signaling.

The protein localises to the secreted. Cytokine with a wide variety of biological functions in immunity, tissue regeneration, and metabolism. Binds to IL6R, then the complex associates to the signaling subunit IL6ST/gp130 to trigger the intracellular IL6-signaling pathway. The interaction with the membrane-bound IL6R and IL6ST stimulates 'classic signaling', whereas the binding of IL6 and soluble IL6R to IL6ST stimulates 'trans-signaling'. Alternatively, 'cluster signaling' occurs when membrane-bound IL6:IL6R complexes on transmitter cells activate IL6ST receptors on neighboring receiver cells. In terms of biological role, IL6 is a potent inducer of the acute phase response. Rapid production of IL6 contributes to host defense during infection and tissue injury, but excessive IL6 synthesis is involved in disease pathology. In the innate immune response, is synthesized by myeloid cells, such as macrophages and dendritic cells, upon recognition of pathogens through toll-like receptors (TLRs) at the site of infection or tissue injury. In the adaptive immune response, is required for the differentiation of B cells into immunoglobulin-secreting cells. Plays a major role in the differentiation of CD4(+) T cell subsets. Essential factor for the development of T follicular helper (Tfh) cells that are required for the induction of germinal-center formation. Required to drive naive CD4(+) T cells to the Th17 lineage. Also required for proliferation of myeloma cells and the survival of plasmablast cells. Its function is as follows. Acts as an essential factor in bone homeostasis and on vessels directly or indirectly by induction of VEGF, resulting in increased angiogenesis activity and vascular permeability. Induces, through 'trans-signaling' and synergistically with IL1B and TNF, the production of VEGF. Involved in metabolic controls, is discharged into the bloodstream after muscle contraction increasing lipolysis and improving insulin resistance. 'Trans-signaling' in central nervous system also regulates energy and glucose homeostasis. Mediates, through GLP-1, crosstalk between insulin-sensitive tissues, intestinal L cells and pancreatic islets to adapt to changes in insulin demand. Also acts as a myokine. Plays a protective role during liver injury, being required for maintenance of tissue regeneration. Also has a pivotal role in iron metabolism by regulating HAMP/hepcidin expression upon inflammation or bacterial infection. Through activation of IL6ST-YAP-NOTCH pathway, induces inflammation-induced epithelial regeneration. The sequence is that of Interleukin-6 (IL6) from Oryctolagus cuniculus (Rabbit).